The primary structure comprises 287 residues: Probable endonuclease 4 (287 aa).

His69, His109, Glu144, Asp178, His181, His215, Asp228, His230, and Glu260 together coordinate Zn(2+).

It belongs to the AP endonuclease 2 family. Requires Zn(2+) as cofactor.

The catalysed reaction is Endonucleolytic cleavage to 5'-phosphooligonucleotide end-products.. In terms of biological role, endonuclease IV plays a role in DNA repair. It cleaves phosphodiester bonds at apurinic or apyrimidinic (AP) sites, generating a 3'-hydroxyl group and a 5'-terminal sugar phosphate. The protein is Probable endonuclease 4 of Thermotoga sp. (strain RQ2).